Here is a 302-residue protein sequence, read N- to C-terminus: 33 kDa chaperonin (302 aa).

2 disulfide bridges follow: C255/C257 and C288/C291.

Belongs to the HSP33 family. Under oxidizing conditions two disulfide bonds are formed involving the reactive cysteines. Under reducing conditions zinc is bound to the reactive cysteines and the protein is inactive.

It is found in the cytoplasm. Redox regulated molecular chaperone. Protects both thermally unfolding and oxidatively damaged proteins from irreversible aggregation. Plays an important role in the bacterial defense system toward oxidative stress. This chain is 33 kDa chaperonin, found in Caulobacter vibrioides (strain ATCC 19089 / CIP 103742 / CB 15) (Caulobacter crescentus).